Here is a 628-residue protein sequence, read N- to C-terminus: Somatic embryogenesis receptor kinase 2 (628 aa).

Residues 1-29 (MGRKKFEAFGFVCLISLLLLFNSLWLASS) form the signal peptide. The Extracellular segment spans residues 30–241 (NMEGDALHSL…PTPGGYSATG (212 aa)). The PSKR1 binding stretch occupies residues 45-85 (DPNNVLQSWDPTLVNPCTWFHVTCNNENSVIRVDLGNADLS). A CLE44 binding region spans residues 56-58 (TLV). C61 and C68 are oxidised to a cystine. Leucine-rich repeat receptor-like protein kinase binding regions lie at residues 62–81 (TWFHVTCNNENSVIRVDLGN) and 100–105 (YLELYS). Brassinolide is bound at residue 64-65 (FH). LRR repeat units lie at residues 95–119 (LKNLQYLELYSNNITGPVPSDLGNL), 121–143 (NLVSLDLYLNSFTGPIPDSLGKL), 144–167 (FKLRFLRLNNNSLTGPIPMSLTNI), and 168–192 (MTLQVLDLSNNRLSGSVPDNGSFSL). 2 N-linked (GlcNAc...) asparagine glycosylation sites follow: N107 and N118. 2 leucine-rich repeat receptor-like protein kinase binding regions span residues 126–129 (DLYL) and 148–150 (FLR). N-linked (GlcNAc...) asparagine glycosylation is found at N153 and N187. The segment at 174–197 (DLSNNRLSGSVPDNGSFSLFTPIS) is leucine-rich repeat receptor-like protein kinase binding. C205 and C213 form a disulfide bridge. The chain crosses the membrane as a helical span at residues 242–262 (AIAGGVAAGAALLFAAPALAF). Residues 263–628 (AWWRRRKPQE…LHAMELSGPR (366 aa)) lie on the Cytoplasmic side of the membrane. At T302 the chain carries Phosphothreonine. One can recognise a Protein kinase domain in the interval 305-592 (FSNKNILGRG…GLAEKWDEWQ (288 aa)). 311–319 (LGRGGFGKV) is an ATP binding site. Phosphothreonine is present on T328. Residue K333 coordinates ATP. Phosphoserine is present on residues S386 and S389. Residue D432 is the Proton acceptor of the active site. Residues T462, T465, T466, and T471 each carry the phosphothreonine modification. Y479 carries the post-translational modification Phosphotyrosine. S481 carries the phosphoserine modification. T482 bears the Phosphothreonine mark. A Phosphoserine modification is found at S486. Residue T562 is modified to Phosphothreonine. At S604 the chain carries Phosphoserine. T616 carries the post-translational modification Phosphothreonine. The residue at position 625 (S625) is a Phosphoserine.

Belongs to the protein kinase superfamily. Ser/Thr protein kinase family. In terms of assembly, homo- and heterodimer. Component of the SERK1 signaling complex, composed of KAPP, CDC48A, GRF6 or GRF7, SERK1, SERK2, SERK3/BAK1 and BRI1. Bind to BRI1 in a brassinolide-dependent manner. Heterodimer with PSKR1. Interacts with the EF-Tu receptor EFR and FLS2 in a specific ligand-induced manner. Interacts with ERECTA in a EPF2-induced manner. Interacts with ERL1 in a EPF1-induced manner. Interacts with TMM. In the presence of the signal peptide RGF1, interacts with RGI3/RGFR1 and RGI4/RGFR2/SKM2. Binds to the peptide CLE44 in the presence of TDR. Autophosphorylated. Expressed in flowers, tapetum, developing microspores, all cells of the embryo sac, provascular strands and developing vascular bundles. Low expression in adult vascular tissue.

It localises to the cell membrane. It carries out the reaction L-seryl-[protein] + ATP = O-phospho-L-seryl-[protein] + ADP + H(+). The catalysed reaction is L-threonyl-[protein] + ATP = O-phospho-L-threonyl-[protein] + ADP + H(+). Functionally, serine/threonine-kinase involved in brassinosteroid-dependent and -independent signaling pathways. Acts redundantly with SERK1 as a control point for sporophytic development controlling male gametophyte production. Serves as coreceptor to small peptide (e.g. RGF1 and CLE44) signaling. Involved in the perception of phytosulfokine and subsequent signal transduction. In Arabidopsis thaliana (Mouse-ear cress), this protein is Somatic embryogenesis receptor kinase 2.